Consider the following 470-residue polypeptide: UDP-N-acetylmuramoylalanine--D-glutamate ligase (470 aa).

120-126 (GSNGKTT) lines the ATP pocket.

This sequence belongs to the MurCDEF family.

It is found in the cytoplasm. The catalysed reaction is UDP-N-acetyl-alpha-D-muramoyl-L-alanine + D-glutamate + ATP = UDP-N-acetyl-alpha-D-muramoyl-L-alanyl-D-glutamate + ADP + phosphate + H(+). Its pathway is cell wall biogenesis; peptidoglycan biosynthesis. Its function is as follows. Cell wall formation. Catalyzes the addition of glutamate to the nucleotide precursor UDP-N-acetylmuramoyl-L-alanine (UMA). The chain is UDP-N-acetylmuramoylalanine--D-glutamate ligase from Nitrosomonas eutropha (strain DSM 101675 / C91 / Nm57).